We begin with the raw amino-acid sequence, 159 residues long: RNA pyrophosphohydrolase (159 aa).

The 144-residue stretch at 6–149 (GYRPNVGIVI…KRNVYRRMMK (144 aa)) folds into the Nudix hydrolase domain. Positions 38–59 (GGINSGETAEQAMFRELFEEVG) match the Nudix box motif.

It belongs to the Nudix hydrolase family. RppH subfamily. Requires a divalent metal cation as cofactor.

In terms of biological role, accelerates the degradation of transcripts by removing pyrophosphate from the 5'-end of triphosphorylated RNA, leading to a more labile monophosphorylated state that can stimulate subsequent ribonuclease cleavage. The chain is RNA pyrophosphohydrolase from Baumannia cicadellinicola subsp. Homalodisca coagulata.